The chain runs to 213 residues: Large ribosomal subunit protein uL1 (213 aa).

This sequence belongs to the universal ribosomal protein uL1 family.

The protein is Large ribosomal subunit protein uL1 (RPL10A) of Chlamydomonas reinhardtii (Chlamydomonas smithii).